A 376-amino-acid polypeptide reads, in one-letter code: Ribonuclease D (376 aa).

The 3'-5' exonuclease domain maps to 8–176 (IQWIRDDASL…VYLALDARLS (169 aa)). Residues 214 to 294 (RPQQLAVLRE…AEAARLPQSE (81 aa)) form the HRDC domain.

Belongs to the RNase D family. A divalent metal cation serves as cofactor.

It is found in the cytoplasm. The catalysed reaction is Exonucleolytic cleavage that removes extra residues from the 3'-terminus of tRNA to produce 5'-mononucleotides.. Functionally, exonuclease involved in the 3' processing of various precursor tRNAs. Initiates hydrolysis at the 3'-terminus of an RNA molecule and releases 5'-mononucleotides. This is Ribonuclease D from Pseudomonas paraeruginosa (strain DSM 24068 / PA7) (Pseudomonas aeruginosa (strain PA7)).